The sequence spans 439 residues: Glucan 1,3-beta-glucosidase (439 aa).

The signal sequence occupies residues 1–18 (MLLSLLFLLSTFAFGALT). Glutamate 227 serves as the catalytic Proton donor. 2 disulfide bridges follow: cysteine 311–cysteine 437 and cysteine 336–cysteine 366. The Nucleophile role is filled by glutamate 328.

This sequence belongs to the glycosyl hydrolase 5 (cellulase A) family.

It localises to the secreted. It catalyses the reaction Successive hydrolysis of beta-D-glucose units from the non-reducing ends of (1-&gt;3)-beta-D-glucans, releasing alpha-glucose.. Its function is as follows. Beta-glucanases participate in the metabolism of beta-glucan, the main structural component of the cell wall. It could also function biosynthetically as a transglycosylase. The protein is Glucan 1,3-beta-glucosidase (EXG1) of Lachancea kluyveri (strain ATCC 58438 / CBS 3082 / BCRC 21498 / NBRC 1685 / JCM 7257 / NCYC 543 / NRRL Y-12651) (Yeast).